The following is a 244-amino-acid chain: MESTRTEAIVLAAMDYRESDRIVTLFTLQYGKVRGVAKGAKRSARRFGPALEPFARIGVELVVREGLSSLRGADIVTLYPGIRRDLRAIGLAGYAVELVDRYLPDGAPSPRLFRLLSSYLERLDQGEPLPSDRRFFEANFLNILGYRISLDHCASCGVELPATAERRTGASGMILCANCGRYGASVGPEAAALLGRCIATGRFGAVLFSPQSLREAGTLLDGAIAAHLTRPLNSLAFLKQIEPD.

The protein belongs to the RecO family.

Functionally, involved in DNA repair and RecF pathway recombination. In Geobacter metallireducens (strain ATCC 53774 / DSM 7210 / GS-15), this protein is DNA repair protein RecO.